We begin with the raw amino-acid sequence, 495 residues long: MASGILLNVKEEVTCPICLELLTEPLSLHCGHSFCQACITANHKKSMLYKEGERSCPVCRISYQPENIQPNRHVANIVEKLREVKLSPEEGQKVDHCARHGEKLLLFCQEDSKVICWLCERSQEHRGHHTFLMEEVAQEYHVKLQTALEMLRQKQQEAEKLEADIREEKASWKIQIDHDKTNVLADFEQLREILDREESNELQNLEKEEEDILKSLTKSETKMVQQTQYVRELISDLEHRLQGSMMELLQGVDGIIKRIENMTLKKPKTFHKNQRRVFRAPDLKGMLDMFRELTDVRRCWVDVTLAPNNISHVVIAEDKRQVSSRNPQIMYRTQGTLFQSLTNFIYCTGILGSQSITSGKHYWEVDVSKKSAWILGVCAGFQPDAMYNIEQNENYQPKYGYWVIGLQEGVKYSVFQDGSSHTPFAPFIVPLSVIICPDRVGVFVDYEACTVSFFNITNHGFLIYKFSQCSFSKPVFPYLNPRKCTVPMTLCSPSS.

The residue at position 2 (A2) is an N-acetylalanine. The RING-type zinc finger occupies 15–60 (CPICLELLTEPLSLHCGHSFCQACITANHKKSMLYKEGERSCPVCR). Position 87 is a phosphoserine (S87). Residues 92–133 (QKVDHCARHGEKLLLFCQEDSKVICWLCERSQEHRGHHTFLM) form a B box-type zinc finger. C97, H100, C119, and H125 together coordinate Zn(2+). Residues 137-223 (AQEYHVKLQT…KSLTKSETKM (87 aa)) are a coiled coil. The tract at residues 187 to 200 (FEQLREILDREESN) is required for interaction with GABARAP and for autophagy. Positions 283–495 (LKGMLDMFRE…VPMTLCSPSS (213 aa)) constitute a B30.2/SPRY domain.

The protein belongs to the TRIM/RBCC family. In terms of assembly, can form homodimers and homotrimers. In addition to lower-order dimerization, also exhibits a higher-order multimerization and both low- and high-order multimerizations are essential for its restriction activity. Interacts with BTBD1 and BTBD2. Interacts with PSMC4, PSMC5, PSMD7 and HSPA8/HSC70. Interacts (via B30.2/SPRY domain) with HSPA1A/B. Interacts with PSMC2, MAP3K7/TAK1, TAB2 and TAB3. Interacts with SQSTM1. Interacts with TRIM6 and TRIM34. Interacts with ULK1 (phosphorylated form), GABARAP, GABARAPL1, GABARAPL2, MAP1LC3A, MAP1LC3C and BECN1. In terms of processing, degraded in a proteasome-independent fashion in the absence of viral infection but in a proteasome-dependent fashion following exposure to restriction sensitive virus. Autoubiquitinated in a RING finger- and UBE2D2-dependent manner. Monoubiquitinated by TRIM21. Deubiquitinated by Yersinia YopJ. Ubiquitination may not lead to proteasomal degradation.

It is found in the cytoplasm. The protein localises to the nucleus. It catalyses the reaction S-ubiquitinyl-[E2 ubiquitin-conjugating enzyme]-L-cysteine + [acceptor protein]-L-lysine = [E2 ubiquitin-conjugating enzyme]-L-cysteine + N(6)-ubiquitinyl-[acceptor protein]-L-lysine.. The protein operates within protein modification; protein ubiquitination. Functionally, capsid-specific restriction factor that prevents infection from non-host-adapted retroviruses. Blocks viral replication early in the life cycle, after viral entry but before reverse transcription. In addition to acting as a capsid-specific restriction factor, also acts as a pattern recognition receptor that activates innate immune signaling in response to the retroviral capsid lattice. Binding to the viral capsid triggers its E3 ubiquitin ligase activity, and in concert with the heterodimeric ubiquitin conjugating enzyme complex UBE2V1-UBE2N (also known as UBC13-UEV1A complex) generates 'Lys-63'-linked polyubiquitin chains, which in turn are catalysts in the autophosphorylation of the MAP3K7/TAK1 complex (includes TAK1, TAB2, and TAB3). Activation of the MAP3K7/TAK1 complex by autophosphorylation results in the induction and expression of NF-kappa-B and MAPK-responsive inflammatory genes, thereby leading to an innate immune response in the infected cell. Plays a role in regulating autophagy through activation of autophagy regulator BECN1 by causing its dissociation from its inhibitors BCL2 and TAB2. This is Tripartite motif-containing protein 5 (TRIM5) from Macaca nemestrina (Pig-tailed macaque).